A 484-amino-acid polypeptide reads, in one-letter code: Pentatricopeptide repeat-containing protein At1g09190 (484 aa).

PPR repeat units follow at residues 66–100, 101–135, 136–166, 167–197, 198–232, 233–267, 269–299, 300–334, 336–366, and 372–406; these read NVLVFNAMIKCYSLVGPPLESLSFFSSMKSRGIWA, DEYTYAPLLKSCSSLSDLRFGKCVHGELIRTGFHR, LGKIRIGVVELYTSGGRMGDAQKVFDEMSER, NVVVWNLMIRGFCDSGDVERGLHLFKQMSER, SIVSWNSMISSLSKCGRDREALELFCEMIDQGFDP, DEATVVTVLPISASLGVLDTGKWIHSTAESSGLFK, FITVGNALVDFYCKSGDLEAATAIFRKMQRR, NVVSWNTLISGSAVNGKGEFGIDLFDAMIEEGKVA, NEATFLGVLACCSYTGQVERGEELFGLMMER, and RTEHYGAMVDLMSRSGRITEAFKFLKNMPVNANAA. A type E motif region spans residues 407–482; sequence MWGSLLSACR…STGQSTICDV (76 aa).

This sequence belongs to the PPR family. PCMP-E subfamily.

The polypeptide is Pentatricopeptide repeat-containing protein At1g09190 (PCMP-E70) (Arabidopsis thaliana (Mouse-ear cress)).